Reading from the N-terminus, the 357-residue chain is MDGLNDLRAGWLDRIGGATDEATLEEFRVAALGKKGEISLKMRELGKMTPEERQVAGPALNALKDEVNAAIAAKKAGLADAALDERLKAEWLDVTLPARPKRVGSIHPVSQVTEEVTAIFADMGFSVAEGPQIETDFYNFDALNIPGHHPARAEMDTFYTHRAEGDNRPPHVLRTHTSPVQIRHMEKHGAPCRIIAPGRVYRADYDQTHTPMFHQVEGLVLGRDVSMANLKWVLEEFYSAFFGVQVKTRFRASHFPFVEPGAEVDIQCSFEGGTVKVGEGDDWLEILGSGMVHPKVLEAGGIDPQEFQGFAFGMGIDRIAMLKYGIPDLRDFFASDLRWLRHYGFASLEMPSVHAGD.

Glu259 contacts Mg(2+).

This sequence belongs to the class-II aminoacyl-tRNA synthetase family. Phe-tRNA synthetase alpha subunit type 1 subfamily. Tetramer of two alpha and two beta subunits. It depends on Mg(2+) as a cofactor.

Its subcellular location is the cytoplasm. The enzyme catalyses tRNA(Phe) + L-phenylalanine + ATP = L-phenylalanyl-tRNA(Phe) + AMP + diphosphate + H(+). The sequence is that of Phenylalanine--tRNA ligase alpha subunit from Jannaschia sp. (strain CCS1).